The following is a 340-amino-acid chain: UPF0324 membrane protein BA_5405/GBAA_5405/BAS5024 (340 aa).

10 consecutive transmembrane segments (helical) span residues 13–35 (FGFS…LAEL), 40–59 (IMGQ…AAIG), 99–118 (VLVI…YGLT), 128–150 (GILT…APQV), 157–179 (TAVG…TLLY), 189–211 (YGVF…APGG), 218–240 (AVIV…GVWF), 255–277 (LPIP…GIIP), 279–301 (VVAG…GLGL), and 316–338 (FVAG…YALG).

It belongs to the UPF0324 family.

The protein resides in the cell membrane. The chain is UPF0324 membrane protein BA_5405/GBAA_5405/BAS5024 from Bacillus anthracis.